The following is a 466-amino-acid chain: 3-isopropylmalate dehydratase large subunit (466 aa).

Residues Cys347, Cys407, and Cys410 each contribute to the [4Fe-4S] cluster site.

Belongs to the aconitase/IPM isomerase family. LeuC type 1 subfamily. Heterodimer of LeuC and LeuD. Requires [4Fe-4S] cluster as cofactor.

The catalysed reaction is (2R,3S)-3-isopropylmalate = (2S)-2-isopropylmalate. It functions in the pathway amino-acid biosynthesis; L-leucine biosynthesis; L-leucine from 3-methyl-2-oxobutanoate: step 2/4. Its function is as follows. Catalyzes the isomerization between 2-isopropylmalate and 3-isopropylmalate, via the formation of 2-isopropylmaleate. This Escherichia coli O157:H7 protein is 3-isopropylmalate dehydratase large subunit.